Here is a 399-residue protein sequence, read N- to C-terminus: Elongation factor Tu 2 (399 aa).

The tr-type G domain maps to 10–209 (KPHVNIGTIG…QVDGYIPEPE (200 aa)). The segment at 19 to 26 (GHVDHGKT) is G1. 19–26 (GHVDHGKT) contributes to the GTP binding site. Threonine 26 is a Mg(2+) binding site. Residues 60 to 64 (GITIA) are G2. Residues 81–84 (DCPG) form a G3 region. Residues 81-85 (DCPGH) and 136-139 (NKAD) contribute to the GTP site. Positions 136-139 (NKAD) are G4. Positions 174–176 (SAL) are G5.

This sequence belongs to the TRAFAC class translation factor GTPase superfamily. Classic translation factor GTPase family. EF-Tu/EF-1A subfamily. As to quaternary structure, monomer.

Its subcellular location is the cytoplasm. It catalyses the reaction GTP + H2O = GDP + phosphate + H(+). Its function is as follows. GTP hydrolase that promotes the GTP-dependent binding of aminoacyl-tRNA to the A-site of ribosomes during protein biosynthesis. In Syntrophotalea carbinolica (strain DSM 2380 / NBRC 103641 / GraBd1) (Pelobacter carbinolicus), this protein is Elongation factor Tu 2.